A 593-amino-acid chain; its full sequence is Elongation factor 4 (593 aa).

The tr-type G domain maps to 2 to 181; that stretch reads KNIRNFCIIA…AVVERIPHPT (180 aa). GTP contacts are provided by residues 14–19 and 128–131; these read DHGKST and NKCD.

This sequence belongs to the TRAFAC class translation factor GTPase superfamily. Classic translation factor GTPase family. LepA subfamily.

It is found in the cell inner membrane. The catalysed reaction is GTP + H2O = GDP + phosphate + H(+). Required for accurate and efficient protein synthesis under certain stress conditions. May act as a fidelity factor of the translation reaction, by catalyzing a one-codon backward translocation of tRNAs on improperly translocated ribosomes. Back-translocation proceeds from a post-translocation (POST) complex to a pre-translocation (PRE) complex, thus giving elongation factor G a second chance to translocate the tRNAs correctly. Binds to ribosomes in a GTP-dependent manner. This is Elongation factor 4 from Phocaeicola vulgatus (strain ATCC 8482 / DSM 1447 / JCM 5826 / CCUG 4940 / NBRC 14291 / NCTC 11154) (Bacteroides vulgatus).